Here is a 250-residue protein sequence, read N- to C-terminus: Probable transcriptional regulatory protein SYNAS_07390 (250 aa).

Belongs to the TACO1 family.

The protein resides in the cytoplasm. The polypeptide is Probable transcriptional regulatory protein SYNAS_07390 (Syntrophus aciditrophicus (strain SB)).